A 266-amino-acid polypeptide reads, in one-letter code: MSTDRLQYVYAVTRPFDGVLPEGAHGIGGEPPRLLRHGDLVAVTGAVPAGDFDEAPLRARLEDLDWLADAARAHDAVISALSTVTCPLPLRLATVCRDDSGVRRLLEDGHDRFVRALERLDGRVEWGVKVYAEPGAAQQQEEEPAAHAREASGRDYLRRRLHARRSRDGDWQRADALCRRLHTELSRCAEAGTVHRPQDARLSGVPGVNVLNAAYLVDRARSQQFVELVDGASEPGVRVELTGPWAPYSFAGIAEEDVHETQEAGR.

Belongs to the gas vesicle GvpF/GvpL family.

The protein resides in the gas vesicle. Its function is as follows. Might be involved in nucleating gas vesicle formation. A minor component of the gas vesicle. Gas vesicles are hollow, gas filled proteinaceous nanostructures found in some microorganisms. It is not clear what function gas vesicles perform in soil bacteria. This Streptomyces sp. (strain CB03234) protein is Gas vesicle protein L.